Consider the following 562-residue polypeptide: MFS-type efflux pump elcC (562 aa).

Transmembrane regions (helical) follow at residues 50 to 70, 80 to 100, 111 to 131, 139 to 159, 184 to 204, 215 to 235, 257 to 277, 288 to 308, 309 to 329, 351 to 371, and 383 to 403; these read WVFLIALALFEIGSLICGAAP, VVAGIGSGGLFAGAILLVAEF, GMLGAMYSVASVAGPLMGGAF, LCFYINLPLGVVTAVIVFLLV, LYGLVVLVPTIICILLATQWG, IIALFVVGFVLFVAFVVIEIW, IFSFCLFGSFLVVAYFLPLWF, SGIHNLPSILGTTIFSVAAGG, MVFGLGYYTWACILGSVLAAV, VLYGAGCGFGLNQPLIAIQAA, and VVIFMQTFGGTIAIAVAQNVF. An N-linked (GlcNAc...) asparagine glycan is attached at N448. A helical membrane pass occupies residues 455-475; sequence FYVAVATAGLSMAGSILIPWL. The disordered stretch occupies residues 515-562; sequence EIASEDSQSSDIEKVPRNNEVSTYDSQTSEVEKSSVGSTNRKVESIRN. The span at 533-554 shows a compositional bias: polar residues; that stretch reads NEVSTYDSQTSEVEKSSVGSTN.

Belongs to the major facilitator superfamily. TCR/Tet family.

It is found in the cell membrane. In terms of biological role, MFS-type efflux pump; part of the gene cluster that mediates the biosynthesis of elsinochrome C, a perelyenequinone phytotoxin structurally similar to cercosporin. The polypeptide is MFS-type efflux pump elcC (Phaeosphaeria nodorum (strain SN15 / ATCC MYA-4574 / FGSC 10173) (Glume blotch fungus)).